A 201-amino-acid chain; its full sequence is Holliday junction branch migration complex subunit RuvA (201 aa).

The domain I stretch occupies residues 1-64 (MIGFIRGLLV…EDAHSLFGFG (64 aa)). Residues 65 to 143 (TEAERGLFRS…IGVPSLAPAS (79 aa)) form a domain II region. The segment at 144–153 (FAGGAAPLPA) is flexible linker. The interval 153-201 (AADPADEAVSALIALGFKPQEANTLVARQAAEGRSAEDLIRAALQSAVR) is domain III.

Belongs to the RuvA family. In terms of assembly, homotetramer. Forms an RuvA(8)-RuvB(12)-Holliday junction (HJ) complex. HJ DNA is sandwiched between 2 RuvA tetramers; dsDNA enters through RuvA and exits via RuvB. An RuvB hexamer assembles on each DNA strand where it exits the tetramer. Each RuvB hexamer is contacted by two RuvA subunits (via domain III) on 2 adjacent RuvB subunits; this complex drives branch migration. In the full resolvosome a probable DNA-RuvA(4)-RuvB(12)-RuvC(2) complex forms which resolves the HJ.

It localises to the cytoplasm. In terms of biological role, the RuvA-RuvB-RuvC complex processes Holliday junction (HJ) DNA during genetic recombination and DNA repair, while the RuvA-RuvB complex plays an important role in the rescue of blocked DNA replication forks via replication fork reversal (RFR). RuvA specifically binds to HJ cruciform DNA, conferring on it an open structure. The RuvB hexamer acts as an ATP-dependent pump, pulling dsDNA into and through the RuvAB complex. HJ branch migration allows RuvC to scan DNA until it finds its consensus sequence, where it cleaves and resolves the cruciform DNA. The sequence is that of Holliday junction branch migration complex subunit RuvA from Methylococcus capsulatus (strain ATCC 33009 / NCIMB 11132 / Bath).